Consider the following 96-residue polypeptide: Acylphosphatase (96 aa).

The Acylphosphatase-like domain occupies 4-96 (RCEFLIFGKV…ESLNDFEILR (93 aa)). Active-site residues include Arg19 and Asn42.

It belongs to the acylphosphatase family.

The enzyme catalyses an acyl phosphate + H2O = a carboxylate + phosphate + H(+). This Helicobacter hepaticus (strain ATCC 51449 / 3B1) protein is Acylphosphatase (acyP).